The sequence spans 194 residues: Cupin-domain-containing oxidoreductase virC (194 aa).

One can recognise a Cupin type-2 domain in the interval 106–175 (IDFAPNVISP…GTLPGRMMWV (70 aa)).

The protein belongs to the virC family.

It functions in the pathway secondary metabolite biosynthesis. Cupin-domain-containing oxidoreductase; part of the gene cluster that mediates the biosynthesis of virensols and trichoxide, fungal natural products that contain or are derived from a salicylaldehyde core. The pathway begins with the synthesis of the reduced chain in virensol C by the highly reducing polyketide synthase virA via condensation of one acetate and 8 malonate units. VirA has interesting programming rules since the first 2 ketides are fully reduced, the 3 following ketides undergo beta-dehydration, and the last 3 ketides are only reduced to beta-hydroxys to yield the trihydroxy portion. The production of aldehyde virensol C by virA alone is surprising, since virA does not contain a reductase (R) domain that is typically associated with reductive product release in HRPKS. The cupin-domain enzyme virC is involved in enhancing virA product turnover. The short-chain dehydrogenase virB then oxidizes the C-7 alcohol of virensol C to a ketone, yielding virensol D. Virensol D is further transformed to salicylaldehyde 5-deoxyaurocitrin by the short-chain dehydrogenase virD. VirD catalyzes the dehydrogenation of C-3 to form the beta-ketone aldehyde, which is followed by the generation of the nucleophilic C-2 that is required for the intramolecular aldol condensation between C-2 and C-7, itself followed by dehydration and aromatization which leads to salicylaldehyde 5-deoxyaurocitrin. While the dehydrogenation of virensol D is definitely catalyzed by virD, the aldol condensation and dehydration may be uncatalyzed or assisted by virD. The short chain dehydrogenase virG then converts salicylaldehyde 5-deoxyaurocitrin into virensol B which is further hydroxylated by the cytochrome P450 monooxygenase virE to yield the hydroquinone virensol A. VirI then may oxidize virensol A to form the quinone, while virH performs the epoxidation. Finally, the two remaining short-chain dehydrogenases, virK and virL, are probably responsible for reducing the ketones to the corresponding alcohols to furnish the epoxycyclohexanol structure in trichoxide. This chain is Cupin-domain-containing oxidoreductase virC, found in Hypocrea virens (strain Gv29-8 / FGSC 10586) (Gliocladium virens).